Here is a 340-residue protein sequence, read N- to C-terminus: S-adenosylmethionine:tRNA ribosyltransferase-isomerase (340 aa).

It belongs to the QueA family. Monomer.

The protein localises to the cytoplasm. It catalyses the reaction 7-aminomethyl-7-carbaguanosine(34) in tRNA + S-adenosyl-L-methionine = epoxyqueuosine(34) in tRNA + adenine + L-methionine + 2 H(+). It participates in tRNA modification; tRNA-queuosine biosynthesis. Transfers and isomerizes the ribose moiety from AdoMet to the 7-aminomethyl group of 7-deazaguanine (preQ1-tRNA) to give epoxyqueuosine (oQ-tRNA). This chain is S-adenosylmethionine:tRNA ribosyltransferase-isomerase, found in Campylobacter concisus (strain 13826).